The primary structure comprises 614 residues: Spastin (614 aa).

The interval 1 to 45 is disordered; sequence MNSPGGRGKKKGSGGPSSPVPPRPPPPCQARSRPAPKPAPPPQSP. A required for nuclear localization region spans residues 1-50; that stretch reads MNSPGGRGKKKGSGGPSSPVPPRPPPPCQARSRPAPKPAPPPQSPHKRNL. Residues 1-56 lie on the Cytoplasmic side of the membrane; it reads MNSPGGRGKKKGSGGPSSPVPPRPPPPCQARSRPAPKPAPPPQSPHKRNLYYFSYP. The segment at 1-80 is required for interaction with ATL1; sequence MNSPGGRGKK…LGLLFVWLCQ (80 aa). The required for midbody localization stretch occupies residues 1 to 192; the sequence is MNSPGGRGKK…LVMAKDRLQL (192 aa). A required for interaction with RTN1 region spans residues 1-298; the sequence is MNSPGGRGKK…STPKTNRTNK (298 aa). Positions 4 to 11 match the Nuclear localization signal motif; the sequence is PGGRGKKK. Pro residues-rich tracts occupy residues 18–28 and 35–44; these read SPVPPRPPPPC and APKPAPPPQS. The interval 50 to 87 is required for interaction with SSNA1 and microtubules; sequence LYYFSYPLFLGFALLRLVAFHLGLLFVWLCQRFSRALM. Positions 57–77 form an intramembrane region, helical; the sequence is LFLGFALLRLVAFHLGLLFVW. The Nuclear export signal signature appears at 59–67; it reads LGFALLRLV. The Cytoplasmic portion of the chain corresponds to 78-614; the sequence is LCQRFSRALM…WNKDFGDTTV (537 aa). Residues 110–194 form a sufficient for interaction with CHMP1B region; sequence EAERVRAFHK…MAKDRLQLLE (85 aa). Positions 112–198 are required for interaction with microtubules; it reads ERVRAFHKQA…RLQLLEKLQP (87 aa). One can recognise an MIT domain in the interval 118–193; it reads HKQAFEYISV…VMAKDRLQLL (76 aa). The tract at residues 220–310 is disordered; it reads NGHLQSESGA…TPTTAARKKK (91 aa). Residues 226–614 are sufficient for microtubule severing; the sequence is ESGAVPKRKD…WNKDFGDTTV (389 aa). A phosphoserine mark is found at S243 and S266. Residues 268 to 326 form a required for interaction with microtubules and microtubule severing region; that stretch reads SGLSMVSGVRQGPGSAAATHKSTPKTNRTNKPSTPTTAARKKKDLKNFRNVDSNLANLI. Residues 287–304 show a composition bias toward polar residues; it reads HKSTPKTNRTNKPSTPTT. At T304 the chain carries Phosphothreonine. The short motif at 307-310 is the Nuclear localization signal element; the sequence is RKKK. Residue 380-387 coordinates ATP; the sequence is GPPGNGKT. S595 bears the Phosphoserine mark.

The protein belongs to the AAA ATPase family. Spastin subfamily. As to quaternary structure, homohexamer. Mostly monomeric, but assembles into hexameric structure for short periods of time. Oligomerization seems to be a prerequisite for catalytic activity. Binding to ATP in a cleft between two adjacent subunits stabilizes the homohexameric form. Binds to microtubules at least in part via the alpha-tubulin and beta-tubulin tails. The hexamer adopts a ring conformation through which microtubules pass prior to being severed. Does not interact strongly with tubulin heterodimers. Interacts (via MIT domain) with CHMP1B; the interaction is direct. Interacts with SSNA1. Interacts with ATL1. Interacts with RTN1. Interacts with ZFYVE27. Interacts with REEP1. Interacts (via MIT domain) with IST1.

The protein localises to the membrane. It is found in the endoplasmic reticulum. The protein resides in the midbody. It localises to the cytoplasm. Its subcellular location is the cytoskeleton. The protein localises to the microtubule organizing center. It is found in the centrosome. The protein resides in the perinuclear region. It localises to the nucleus. Its subcellular location is the spindle. The protein localises to the cell projection. It is found in the axon. It carries out the reaction n ATP + n H2O + a microtubule = n ADP + n phosphate + (n+1) alpha/beta tubulin heterodimers.. Its activity is regulated as follows. Allosteric enzyme with a cooperative mechanism; at least two neighbor subunits influence each other strongly in spastin hexamers. Microtubule binding promotes cooperative interactions among spastin subunits. ATP-dependent microtubule severing protein that specifically recognizes and cuts microtubules that are polyglutamylated. Preferentially recognizes and acts on microtubules decorated with short polyglutamate tails: severing activity increases as the number of glutamates per tubulin rises from one to eight, but decreases beyond this glutamylation threshold. Severing activity is not dependent on tubulin acetylation or detyrosination. Microtubule severing promotes reorganization of cellular microtubule arrays and the release of microtubules from the centrosome following nucleation. It is critical for the biogenesis and maintenance of complex microtubule arrays in axons, spindles and cilia. SPAST is involved in abscission step of cytokinesis and nuclear envelope reassembly during anaphase in cooperation with the ESCRT-III complex. Recruited at the midbody, probably by IST1, and participates in membrane fission during abscission together with the ESCRT-III complex. Recruited to the nuclear membrane by IST1 and mediates microtubule severing, promoting nuclear envelope sealing and mitotic spindle disassembly during late anaphase. Required for membrane traffic from the endoplasmic reticulum (ER) to the Golgi and endosome recycling. Recruited by IST1 to endosomes and regulates early endosomal tubulation and recycling by mediating microtubule severing. Probably plays a role in axon growth and the formation of axonal branches. This is Spastin from Bos taurus (Bovine).